Reading from the N-terminus, the 315-residue chain is Methionyl-tRNA formyltransferase (315 aa).

113–116 contacts (6S)-5,6,7,8-tetrahydrofolate; sequence SLLP.

Belongs to the Fmt family.

The catalysed reaction is L-methionyl-tRNA(fMet) + (6R)-10-formyltetrahydrofolate = N-formyl-L-methionyl-tRNA(fMet) + (6S)-5,6,7,8-tetrahydrofolate + H(+). Its function is as follows. Attaches a formyl group to the free amino group of methionyl-tRNA(fMet). The formyl group appears to play a dual role in the initiator identity of N-formylmethionyl-tRNA by promoting its recognition by IF2 and preventing the misappropriation of this tRNA by the elongation apparatus. The protein is Methionyl-tRNA formyltransferase of Escherichia coli O45:K1 (strain S88 / ExPEC).